The sequence spans 248 residues: Putative glutamine amidotransferase-like protein C13C5.04 (248 aa).

The 205-residue stretch at P13 to F217 folds into the Glutamine amidotransferase type-1 domain.

This is Putative glutamine amidotransferase-like protein C13C5.04 from Schizosaccharomyces pombe (strain 972 / ATCC 24843) (Fission yeast).